A 249-amino-acid polypeptide reads, in one-letter code: Phosphomannomutase 1 (249 aa).

Catalysis depends on Asp12, which acts as the Nucleophile. Mg(2+) contacts are provided by Asp12 and Asp14. Asp14 acts as the Proton donor/acceptor in catalysis. Positions 21, 123, 134, 141, 179, and 181 each coordinate alpha-D-mannose 1-phosphate. Mg(2+) contacts are provided by Asp209, Asp223, and Thr227.

This sequence belongs to the eukaryotic PMM family. Homodimer.

Its subcellular location is the cytoplasm. It carries out the reaction alpha-D-mannose 1-phosphate = D-mannose 6-phosphate. Its pathway is nucleotide-sugar biosynthesis; GDP-alpha-D-mannose biosynthesis; alpha-D-mannose 1-phosphate from D-fructose 6-phosphate: step 2/2. Involved in the synthesis of the GDP-mannose and dolichol-phosphate-mannose required for a number of critical mannosyl transfer reactions. The polypeptide is Phosphomannomutase 1 (pmmA) (Dictyostelium discoideum (Social amoeba)).